The following is a 250-amino-acid chain: 2,3-bisphosphoglycerate-dependent phosphoglycerate mutase (250 aa).

Substrate is bound by residues 10–17, 23–24, Arg62, 89–92, Lys100, 116–117, and 185–186; these read RHGESQWN, TG, ERHY, RR, and GN. His11 serves as the catalytic Tele-phosphohistidine intermediate. Glu89 acts as the Proton donor/acceptor in catalysis.

Belongs to the phosphoglycerate mutase family. BPG-dependent PGAM subfamily. In terms of assembly, homodimer.

The enzyme catalyses (2R)-2-phosphoglycerate = (2R)-3-phosphoglycerate. The protein operates within carbohydrate degradation; glycolysis; pyruvate from D-glyceraldehyde 3-phosphate: step 3/5. Its function is as follows. Catalyzes the interconversion of 2-phosphoglycerate and 3-phosphoglycerate. In Yersinia enterocolitica serotype O:8 / biotype 1B (strain NCTC 13174 / 8081), this protein is 2,3-bisphosphoglycerate-dependent phosphoglycerate mutase.